A 417-amino-acid polypeptide reads, in one-letter code: WAT1-related protein At3g02690, chloroplastic (417 aa).

The N-terminal 68 residues, 1–68 (MEWPWSAIAA…RRINGDSVVR (68 aa)), are a transit peptide targeting the chloroplast. Positions 67–92 (VRRSTTSNNSTEETESSSSSSSVDCV) are disordered. Positions 68 to 89 (RRSTTSNNSTEETESSSSSSSV) are enriched in low complexity. 10 helical membrane-spanning segments follow: residues 122 to 142 (FLEW…MVAM), 152 to 172 (FFVA…FAVY), 183 to 203 (AWFS…GFLA), 213 to 233 (LGSV…SFLF), 237 to 257 (IGIV…LLEV), 269 to 289 (LWGS…IGTV), 301 to 321 (IMAT…ISVI), 339 to 359 (VIAL…VYFY), 369 to 389 (LSSL…LYLN), and 392 to 412 (FSSL…LVNF). EamA domains lie at 133–255 (FFWG…LLLL) and 283–411 (SMAI…YLVN).

The protein belongs to the drug/metabolite transporter (DMT) superfamily. Plant drug/metabolite exporter (P-DME) (TC 2.A.7.4) family.

It is found in the plastid. The protein localises to the chloroplast membrane. The sequence is that of WAT1-related protein At3g02690, chloroplastic from Arabidopsis thaliana (Mouse-ear cress).